A 320-amino-acid chain; its full sequence is Ferrochelatase (320 aa).

Residues histidine 194 and glutamate 275 each contribute to the Fe cation site.

This sequence belongs to the ferrochelatase family. Monomer.

It localises to the cytoplasm. It carries out the reaction heme b + 2 H(+) = protoporphyrin IX + Fe(2+). The protein operates within porphyrin-containing compound metabolism; protoheme biosynthesis; protoheme from protoporphyrin-IX: step 1/1. Functionally, catalyzes the ferrous insertion into protoporphyrin IX. In Salmonella paratyphi A (strain ATCC 9150 / SARB42), this protein is Ferrochelatase.